The chain runs to 68 residues: Lantibiotic mersacidin (68 aa).

A disordered region spans residues 1–28 (MSQEAIIRSWKDPFSRENSTQNPAGNPF). The propeptide occupies 1–48 (MSQEAIIRSWKDPFSRENSTQNPAGNPFSELKEAQMDKLVGAGDMEAA). Residues 49 to 50 (CT) constitute a cross-link (beta-methyllanthionine (Cys-Thr)). 2 consecutive cross-links (beta-methyllanthionine (Thr-Cys)) follow at residues 52–60 (TLPGGGGVC) and 61–66 (TLTSEC). The S-(2-aminovinyl)-3-methyl-D-cysteine (Thr-Cys) cross-link spans 63–68 (TSECIC). Ser64 is modified (2,3-didehydroalanine (Ser)).

The protein belongs to the type B lantibiotic family. Post-translationally, maturation of lantibiotics involves the enzymatic conversion of Thr, and Ser into dehydrated AA and the formation of thioether bonds with cysteine. The carboxy-terminal beta-methyllanthionine undergoes decarboxylation. This is followed by membrane translocation and cleavage of the modified precursor.

Kills a number of Gram-positive bacteria. Acts at the level of cell wall biosynthesis by interfering with bacterial peptidoglycan biosynthesis. Specifically inhibits the conversion of the lipid II intermediate into polymeric nascent glycan strands by transglycosylation. May interact with the peptidoglycan precursor rather than with the enzyme. This Bacillus sp. (strain HIL-Y85/54728) protein is Lantibiotic mersacidin (mrsA).